The chain runs to 211 residues: FMN-dependent NADH:quinone oxidoreductase 2 (211 aa).

Residue 102–105 (MWNF) coordinates FMN.

Belongs to the azoreductase type 1 family. Homodimer. Requires FMN as cofactor.

It catalyses the reaction 2 a quinone + NADH + H(+) = 2 a 1,4-benzosemiquinone + NAD(+). The enzyme catalyses N,N-dimethyl-1,4-phenylenediamine + anthranilate + 2 NAD(+) = 2-(4-dimethylaminophenyl)diazenylbenzoate + 2 NADH + 2 H(+). Its function is as follows. Quinone reductase that provides resistance to thiol-specific stress caused by electrophilic quinones. Functionally, also exhibits azoreductase activity. Catalyzes the reductive cleavage of the azo bond in aromatic azo compounds to the corresponding amines. In Bacillus thuringiensis subsp. konkukian (strain 97-27), this protein is FMN-dependent NADH:quinone oxidoreductase 2.